The sequence spans 688 residues: Phosphatidylinositol 4-phosphate 5-kinase type-1 gamma (688 aa).

The interval 48-71 (GQPGPGHGKKLGHRGVDASGETTY) is disordered. A PIPK domain is found at 75-443 (TSSTLKGAIQ…RFFKFMSSTV (369 aa)). Residues lysine 265 and lysine 268 each carry the N6-acetyllysine modification. Arginine 459 bears the Asymmetric dimethylarginine; alternate mark. Position 459 is an omega-N-methylarginine; alternate (arginine 459). Low complexity predominate over residues 525-534 (TTLSSTSLSI). Disordered regions lie at residues 525 to 565 (TTLS…QEEL) and 592 to 629 (GAGVEVPPSGASAAATVEVDAASQASEPASQASDEEDA). Residue serine 554 is modified to Phosphoserine. The segment covering 602 to 623 (ASAAATVEVDAASQASEPASQA) has biased composition (low complexity). At tyrosine 635 the chain carries Phosphotyrosine; by EGFR. Phosphotyrosine; by CSK is present on tyrosine 671. Residue serine 672 is modified to Phosphoserine; by CDK5, MAPK1 and CDK1. Phosphoserine occurs at positions 682 and 686. Threonine 688 carries the post-translational modification Phosphothreonine.

Interacts with TLN1. Interacts with TLN2; interaction stimulates 1-phosphatidylinositol-4-phosphate 5-kinase activity. May compete with beta-integrins for the same binding site on TLN1 and TLN2. Interacts with ARF6; interaction stimulates 1-phosphatidylinositol-4-phosphate 5-kinase activity. Interacts with AP2B1. Interacts with AP2M1; phosphorylation of PIP5K1C by CSK disrupts the interaction; clathrin competes with PIP5K1C. Interacts with CDH1. Interacts with CSK. Interacts with PLCG1; interaction is abolished upon EGF stimulation. Interacts with LAPTM4B; promotes SNX5 association with LAPTM4B; kinase activity of PIP5K1C is required; interaction is regulated by phosphatidylinositol 4,5-bisphosphate generated by PIP5K1C. In terms of processing, phosphorylation on Ser-672 negatively regulates binding to TLN2 and is strongly stimulated in mitosis. Phosphorylation on Tyr-671 is necessary for targeting to focal adhesions. Phosphorylation on Ser-672 and Tyr-671 are mutually exclusive. Phosphorylated by SYK and CSK. Tyrosine phosphorylation is enhanced by PTK2 signaling. Phosphorylated at Tyr-635 upon EGF stimulation. Some studies suggest that phosphorylation on Tyr-671 enhances binding to tailins (TLN1 and TLN2); others that phosphorylation at Tyr-671 does not directly enhance binding to tailins (TLN1 and TLN2) but may act indirectly by inhibiting phosphorylation at Ser-672. Acetylation at Lys-265 and Lys-268 seems to decrease lipid kinase activity. Deacetylation of these sites by SIRT1 positively regulates the exocytosis of TSH-containing granules from pituitary cells.

The protein localises to the cell membrane. The protein resides in the endomembrane system. Its subcellular location is the cytoplasm. It is found in the cell junction. It localises to the focal adhesion. The protein localises to the adherens junction. The protein resides in the cell projection. Its subcellular location is the ruffle membrane. It is found in the phagocytic cup. It localises to the uropodium. It catalyses the reaction a 1,2-diacyl-sn-glycero-3-phospho-(1D-myo-inositol 4-phosphate) + ATP = a 1,2-diacyl-sn-glycero-3-phospho-(1D-myo-inositol-4,5-bisphosphate) + ADP + H(+). The enzyme catalyses 1-octadecanoyl-2-(5Z,8Z,11Z,14Z)-eicosatetraenoyl-sn-glycero-3-phospho-1D-myo-inositol 4-phosphate + ATP = 1-octadecanoyl-2-(5Z,8Z,11Z,14Z)-eicosatetraenoyl-sn-glycero-3-phospho-1D-myo-inositol 4,5-bisphosphate + ADP + H(+). The catalysed reaction is 1-octadecanoyl-2-(9Z)-octadecenoyl-sn-glycero-3-phospho-1D-myo-inositol 4-phosphate + ATP = 1-octadecanoyl-2-(9Z)-octadecenoyl-sn-glycero-3-phospho-1D-myo-inositol 4,5-bisphosphate + ADP + H(+). It carries out the reaction 1-octadecanoyl-2-(9Z)-octadecenoyl-sn-glycero-3-phospho-1D-myo-inositol + ATP = 1-octadecanoyl-2-(9Z)-octadecenoyl-sn-glycero-3-phospho-1D-myo-inositol 5-phosphate + ADP + H(+). It catalyses the reaction 1-octadecanoyl-2-(9Z,12Z)-octadecadienoyl-sn-glycero-3-phospho-1D-myo-inositol + ATP = 1-octadecanoyl-2-(9Z,12Z)-octadecadienoyl-sn-glycero-3-phospho-1D-myo-inositol 5-phosphate + ADP + H(+). The enzyme catalyses 1-octadecanoyl-2-(5Z,8Z,11Z,14Z-eicosatetraenoyl)-sn-glycero-3-phospho-(1D-myo-inositol) + ATP = 1-octadecanoyl-2-(5Z,8Z,11Z,14Z)-eicosatetraenoyl-sn-glycero-3-phospho-1D-myo-inositol 5-phosphate + ADP + H(+). The catalysed reaction is 1,2-di-(9Z,12Z)-octadecadienoyl-sn-glycero-3-phospho-1D-myo-inositol + ATP = 1,2-di(9Z,12Z)-octadecadienoyl-sn-glycero-3-phospho-1D-myo-inositol 5-phosphate + ADP + H(+). Catalyzes the phosphorylation of phosphatidylinositol 4-phosphate (PtdIns(4)P/PI4P) to form phosphatidylinositol 4,5-bisphosphate (PtdIns(4,5)P2/PIP2), a lipid second messenger that regulates several cellular processes such as signal transduction, vesicle trafficking, actin cytoskeleton dynamics, cell adhesion, and cell motility. PtdIns(4,5)P2 can directly act as a second messenger or can be utilized as a precursor to generate other second messengers: inositol 1,4,5-trisphosphate (IP3), diacylglycerol (DAG) or phosphatidylinositol-3,4,5-trisphosphate (PtdIns(3,4,5)P3/PIP3). PIP5K1A-mediated phosphorylation of PtdIns(4)P is the predominant pathway for PtdIns(4,5)P2 synthesis. Together with PIP5K1A, is required for phagocytosis, both enzymes regulating different types of actin remodeling at sequential steps. Promotes particle attachment by generating the pool of PtdIns(4,5)P2 that induces controlled actin depolymerization to facilitate Fc-gamma-R clustering. Mediates RAC1-dependent reorganization of actin filaments. Required for synaptic vesicle transport. Controls the plasma membrane pool of PtdIns(4,5)P2 implicated in synaptic vesicle endocytosis and exocytosis. Plays a role in endocytosis mediated by clathrin and AP-2 (adaptor protein complex 2). Required for clathrin-coated pits assembly at the synapse. Participates in cell junction assembly. Modulates adherens junctions formation by facilitating CDH1/cadherin trafficking. Required for focal adhesion dynamics. Modulates the targeting of talins (TLN1 and TLN2) to the plasma membrane and their efficient assembly into focal adhesions. Regulates the interaction between talins (TLN1 and TLN2) and beta-integrins. Required for uropodium formation and retraction of the cell rear during directed migration. Has a role in growth factor-stimulated directional cell migration and adhesion. Required for talin assembly into nascent adhesions forming at the leading edge toward the direction of the growth factor. Negative regulator of T-cell activation and adhesion. Negatively regulates integrin alpha-L/beta-2 (LFA-1) polarization and adhesion induced by T-cell receptor. Together with PIP5K1A has a role during embryogenesis and together with PIP5K1B may have a role immediately after birth. This chain is Phosphatidylinositol 4-phosphate 5-kinase type-1 gamma, found in Rattus norvegicus (Rat).